A 353-amino-acid polypeptide reads, in one-letter code: Quinolinate synthase (353 aa).

Iminosuccinate is bound by residues His-47 and Ser-68. Cys-113 contacts [4Fe-4S] cluster. Iminosuccinate contacts are provided by residues 139–141 (YAN) and Ser-156. Residue Cys-200 coordinates [4Fe-4S] cluster. Iminosuccinate is bound by residues 226–228 (HPE) and Thr-243. [4Fe-4S] cluster is bound at residue Cys-297.

The protein belongs to the quinolinate synthase family. Type 1 subfamily. [4Fe-4S] cluster is required as a cofactor.

The protein localises to the cytoplasm. It catalyses the reaction iminosuccinate + dihydroxyacetone phosphate = quinolinate + phosphate + 2 H2O + H(+). It participates in cofactor biosynthesis; NAD(+) biosynthesis; quinolinate from iminoaspartate: step 1/1. Functionally, catalyzes the condensation of iminoaspartate with dihydroxyacetone phosphate to form quinolinate. The polypeptide is Quinolinate synthase (Vibrio vulnificus (strain YJ016)).